The primary structure comprises 97 residues: Integration host factor subunit alpha (97 aa).

Residues 50–71 (FGNFTLRDKPQRPGRNPKTGEE) form a disordered region.

This sequence belongs to the bacterial histone-like protein family. As to quaternary structure, heterodimer of an alpha and a beta chain.

This protein is one of the two subunits of integration host factor, a specific DNA-binding protein that functions in genetic recombination as well as in transcriptional and translational control. In Legionella pneumophila (strain Paris), this protein is Integration host factor subunit alpha.